Here is a 482-residue protein sequence, read N- to C-terminus: Catalase (482 aa).

Residues 1 to 11 (MNAMTNKTLTT) are compositionally biased toward polar residues. The disordered stretch occupies residues 1–21 (MNAMTNKTLTTAAGAPVADNN). Catalysis depends on residues His-57 and Asn-130. Tyr-340 is a heme binding site.

This sequence belongs to the catalase family. As to quaternary structure, homodimer. Heme is required as a cofactor.

The enzyme catalyses 2 H2O2 = O2 + 2 H2O. In terms of biological role, decomposes hydrogen peroxide into water and oxygen; serves to protect cells from the toxic effects of hydrogen peroxide. The polypeptide is Catalase (katA) (Bordetella bronchiseptica (strain ATCC BAA-588 / NCTC 13252 / RB50) (Alcaligenes bronchisepticus)).